The primary structure comprises 147 residues: Methylglyoxal synthase (147 aa).

The MGS-like domain maps to 4–147; sequence VSVPATKRIA…LLNFELLCES (144 aa). Substrate contacts are provided by residues His17, Lys21, 43–46, and 63–64; these read TGTT and SG. The Proton donor/acceptor role is filled by Asp69. His96 is a substrate binding site.

It belongs to the methylglyoxal synthase family.

It catalyses the reaction dihydroxyacetone phosphate = methylglyoxal + phosphate. In terms of biological role, catalyzes the formation of methylglyoxal from dihydroxyacetone phosphate. The sequence is that of Methylglyoxal synthase from Leptospira borgpetersenii serovar Hardjo-bovis (strain JB197).